We begin with the raw amino-acid sequence, 1039 residues long: uncharacterized protein (1039 aa).

The N-terminal stretch at 1–28 is a signal peptide; sequence MKLFPRTLLKILVVSFILNFGVTSKSYA. A run of 6 helical transmembrane segments spans residues 326 to 346, 354 to 374, 387 to 407, 491 to 511, 517 to 537, and 551 to 571; these read IVTA…LLAG, YINF…LNIT, MIQW…SWVM, MLVS…AFMV, CMVS…MFLF, and MISF…MFSV. A disordered region spans residues 654-680; it reads KPNQTCDPKAADADTKCNPKPGDSSTS. A helical transmembrane segment spans residues 710-730; that stretch reads IKDILLALVTACFTLYLMYNF. Disordered stretches follow at residues 799–875, 917–949, and 1004–1039; these read LVKG…PTTV, IKEA…LDEN, and LYRS…DENP. Positions 802–811 are enriched in gly residues; that stretch reads GSGGGGGSEG. Low complexity predominate over residues 812 to 836; the sequence is GDSFTSGGLRETSSTAATPSSALSS. Polar residues predominate over residues 843–861; it reads GTATPSSASEEMLDTSFSN. Basic and acidic residues-rich tracts occupy residues 917–939 and 1004–1033; these read IKEA…HTTE and LYRS…KIDS.

The protein belongs to the TrbL/VirB6 family.

It localises to the cell membrane. This is an uncharacterized protein from Rickettsia bellii (strain RML369-C).